The sequence spans 258 residues: Imidazole glycerol phosphate synthase subunit HisF (258 aa).

Catalysis depends on residues Asp11 and Asp130.

The protein belongs to the HisA/HisF family. Heterodimer of HisH and HisF.

The protein resides in the cytoplasm. The enzyme catalyses 5-[(5-phospho-1-deoxy-D-ribulos-1-ylimino)methylamino]-1-(5-phospho-beta-D-ribosyl)imidazole-4-carboxamide + L-glutamine = D-erythro-1-(imidazol-4-yl)glycerol 3-phosphate + 5-amino-1-(5-phospho-beta-D-ribosyl)imidazole-4-carboxamide + L-glutamate + H(+). It functions in the pathway amino-acid biosynthesis; L-histidine biosynthesis; L-histidine from 5-phospho-alpha-D-ribose 1-diphosphate: step 5/9. Functionally, IGPS catalyzes the conversion of PRFAR and glutamine to IGP, AICAR and glutamate. The HisF subunit catalyzes the cyclization activity that produces IGP and AICAR from PRFAR using the ammonia provided by the HisH subunit. The sequence is that of Imidazole glycerol phosphate synthase subunit HisF from Methylobacterium nodulans (strain LMG 21967 / CNCM I-2342 / ORS 2060).